The following is a 155-amino-acid chain: Small ribosomal subunit protein uS7 (155 aa).

The protein belongs to the universal ribosomal protein uS7 family. In terms of assembly, part of the 30S ribosomal subunit. Contacts proteins S9 and S11.

Functionally, one of the primary rRNA binding proteins, it binds directly to 16S rRNA where it nucleates assembly of the head domain of the 30S subunit. Is located at the subunit interface close to the decoding center, probably blocks exit of the E-site tRNA. This chain is Small ribosomal subunit protein uS7, found in Xanthomonas oryzae pv. oryzae (strain MAFF 311018).